A 387-amino-acid chain; its full sequence is Histone deacetylase 2 (387 aa).

Residues 73-382 are histone deacetylase; that stretch reads KVSIIYSSSY…IENLSRQGLI (310 aa). Catalysis depends on H201, which acts as the Proton donor/acceptor. Zn(2+) is bound by residues D238, H240, and D318.

The protein belongs to the histone deacetylase family. HD type 3 subfamily. The cofactor is Zn(2+).

The protein localises to the nucleus. It carries out the reaction N(6)-acetyl-L-lysyl-[histone] + H2O = L-lysyl-[histone] + acetate. In terms of biological role, responsible for the deacetylation of lysine residues on the N-terminal part of the core histones (H2A, H2B, H3 and H4). Histone deacetylation gives a tag for epigenetic repression and plays an important role in transcriptional regulation, cell cycle progression and developmental events. Histone deacetylases act via the formation of large multiprotein complexes. The polypeptide is Histone deacetylase 2 (HDA2) (Arabidopsis thaliana (Mouse-ear cress)).